We begin with the raw amino-acid sequence, 226 residues long: Cytidylate kinase (226 aa).

10-18 (GPAGAGKST) contributes to the ATP binding site.

It belongs to the cytidylate kinase family. Type 1 subfamily.

The protein resides in the cytoplasm. The catalysed reaction is CMP + ATP = CDP + ADP. It carries out the reaction dCMP + ATP = dCDP + ADP. The sequence is that of Cytidylate kinase from Caldicellulosiruptor saccharolyticus (strain ATCC 43494 / DSM 8903 / Tp8T 6331).